The sequence spans 241 residues: Thiamine import ATP-binding protein ThiQ (241 aa).

The region spanning 7 to 235 is the ABC transporter domain; it reads IRLSDVRFSY…AGPEALRHYI (229 aa). ATP is bound at residue 37–44; sequence GPSGSGKS.

This sequence belongs to the ABC transporter superfamily. Thiamine importer (TC 3.A.1.19.1) family. As to quaternary structure, the complex is composed of two ATP-binding proteins (ThiQ), two transmembrane proteins (ThiP) and a solute-binding protein (ThiB).

The protein localises to the cell inner membrane. It carries out the reaction thiamine(out) + ATP + H2O = thiamine(in) + ADP + phosphate + H(+). Its function is as follows. Part of the ABC transporter complex ThiBPQ involved in thiamine import. Responsible for energy coupling to the transport system. The chain is Thiamine import ATP-binding protein ThiQ from Brucella melitensis biotype 1 (strain ATCC 23456 / CCUG 17765 / NCTC 10094 / 16M).